Here is a 361-residue protein sequence, read N- to C-terminus: 3-dehydroquinate synthase (361 aa).

NAD(+)-binding positions include 72–77 (SGEKEK), 130–131 (TT), K142, and K151. Zn(2+)-binding residues include E184, H247, and H264.

The protein belongs to the sugar phosphate cyclases superfamily. Dehydroquinate synthase family. The cofactor is Co(2+). Zn(2+) is required as a cofactor. It depends on NAD(+) as a cofactor.

The protein resides in the cytoplasm. It carries out the reaction 7-phospho-2-dehydro-3-deoxy-D-arabino-heptonate = 3-dehydroquinate + phosphate. It participates in metabolic intermediate biosynthesis; chorismate biosynthesis; chorismate from D-erythrose 4-phosphate and phosphoenolpyruvate: step 2/7. In terms of biological role, catalyzes the conversion of 3-deoxy-D-arabino-heptulosonate 7-phosphate (DAHP) to dehydroquinate (DHQ). This chain is 3-dehydroquinate synthase, found in Bacillus cereus (strain ZK / E33L).